A 142-amino-acid polypeptide reads, in one-letter code: Pro-vaccinia growth factor (142 aa).

The N-terminal stretch at 1-18 is a signal peptide; the sequence is MSMKYLMLLFAAMIIRSF. Residues 19 to 100 are Extracellular-facing; that stretch reads ADSGNAIETT…SENPNTTTSY (82 aa). N-linked (GlcNAc...) asparagine; by host glycosylation is present at Asn-34. Residues 41–81 form the EGF-like domain; that stretch reads AIRLCGPEGDGYCLHGDCIHARDIDGMYCRCSHGYTGIRCQ. Cystine bridges form between Cys-45-Cys-58, Cys-53-Cys-69, and Cys-71-Cys-80. Asn-95 carries an N-linked (GlcNAc...) asparagine; by host glycan. A helical membrane pass occupies residues 101 to 121; that stretch reads IPSPGIMLVLVGIIIIITCCL. The Cytoplasmic segment spans residues 122–142; it reads LSVYRFTRRTNKLPLQDMVVP.

Belongs to the orthopoxvirus OPG019 family. In terms of assembly, vaccinia growth factor interacts with host EGFR and promotes EGFR dimerization.

Its subcellular location is the host membrane. The protein resides in the secreted. Stimulates cellular proliferation (hyperplasia)and mobility around infected cells to promote rapid and efficient spread of infection. This effect is beneficial for virus replication in vivo, because poxviruses replicate possibly better in proliferating cells than in quiescent cells. Acts by binding host EGFR, inducing its dimerization, autophosphorylation and leading to activation of several cellular pathways regulating cell proliferation or cell survival. The activation by host EGFR of mitogen activated protein kinases (MAPK) and extracellular-signal regulated kinases (ERK) are essential for the positive effect of vaccinia growth factor on poxvirus virulence in vivo. The chain is Pro-vaccinia growth factor (OPG019) from Vaccinia virus (strain Copenhagen) (VACV).